The sequence spans 46 residues: Diuretic hormone (46 aa).

Residue Ile46 is modified to Isoleucine amide.

The protein belongs to the sauvagine/corticotropin-releasing factor/urotensin I family.

The protein resides in the secreted. Regulation of fluid secretion. Stimulates primary urine secretion by Malpighian tubules and causes a dose-dependent stimulation of cAMP levels in the tubules. The polypeptide is Diuretic hormone (Acheta domesticus (House cricket)).